The primary structure comprises 374 residues: Potassium channel subfamily K member 9 (374 aa).

Residues 1-8 (MKRQNVRT) lie on the Cytoplasmic side of the membrane. A helical membrane pass occupies residues 9 to 29 (LSLIICTFTYLLVGAAVFDAL). The Extracellular segment spans residues 30–88 (ESDYEMREEEKLKAEEIRLKGKYNISSEDYRQLELVIMQSEPHRAGVQWKFAGSFYFAI). N53 carries N-linked (GlcNAc...) asparagine glycosylation. Residues 89-101 (TVITTIGYGHAAP) constitute an intramembrane region (pore-forming). Residues 102–107 (GTDAGK) are Extracellular-facing. A helical membrane pass occupies residues 108 to 128 (AFCMFYAVLGIPLTLVMFQSL). Topologically, residues 129–158 (GERMNTFVKYLLKRIKKCCGMHSTDVSMEN) are cytoplasmic. Residues 159–179 (MVTVGFFSCMGTLCIGAAAFS) traverse the membrane as a helical segment. The Extracellular segment spans residues 180 to 194 (HYEEWSFFQAYYYCF). Residues 195–207 (ITLTTIGFGDYVA) constitute an intramembrane region (pore-forming). Residues 208–218 (LQKNRALQKKP) are Extracellular-facing. Residues 219–239 (LYVAFSFMYILVGLTVIGAFL) form a helical membrane-spanning segment. Residues 240-374 (NLVVLRFLTM…HRLMKRRKSI (135 aa)) lie on the Cytoplasmic side of the membrane.

It belongs to the two pore domain potassium channel (TC 1.A.1.8) family. As to quaternary structure, homodimer. May form heterodimers with other family members.

Its subcellular location is the cell membrane. Its function is as follows. pH-dependent, voltage-insensitive, background potassium channel protein. This is Potassium channel subfamily K member 9 (kcnk9) from Xenopus laevis (African clawed frog).